The chain runs to 143 residues: Mediator of RNA polymerase II transcription subunit 10 (143 aa).

The tract at residues glycine 123–serine 143 is disordered. Residues alanine 124–serine 143 are compositionally biased toward polar residues.

This sequence belongs to the Mediator complex subunit 10 family. Component of the Mediator complex.

The protein localises to the nucleus. Its function is as follows. Component of the Mediator complex, a coactivator involved in the regulated transcription of nearly all RNA polymerase II-dependent genes. Mediator functions as a bridge to convey information from gene-specific regulatory proteins to the basal RNA polymerase II transcription machinery. Mediator is recruited to promoters by direct interactions with regulatory proteins and serves as a scaffold for the assembly of a functional preinitiation complex with RNA polymerase II and the general transcription factors. The polypeptide is Mediator of RNA polymerase II transcription subunit 10 (NUT2) (Yarrowia lipolytica (strain CLIB 122 / E 150) (Yeast)).